The sequence spans 31 residues: MTITEKFYDKELKRIVEDVFRFEIEMHGYEF.

This is an uncharacterized protein from Archaeoglobus fulgidus (strain ATCC 49558 / DSM 4304 / JCM 9628 / NBRC 100126 / VC-16).